A 122-amino-acid chain; its full sequence is Lycotoxin-Pa4a (122 aa).

Residues 1–20 (MKLGIFFSVFFLAMIHSCLS) form the signal peptide. Positions 21 to 47 (ETNEDKNLESYFREDDLKALSFGEYAR) are excised as a propeptide. Cystine bridges form between Cys-58/Cys-73, Cys-65/Cys-82, Cys-72/Cys-100, and Cys-84/Cys-98.

This sequence belongs to the neurotoxin 19 (CSTX) family. In terms of tissue distribution, expressed by the venom gland.

Its subcellular location is the secreted. The protein resides in the target cell membrane. Potent antibacterial peptide with anti-inflammatory properties. Inhibits both Gram-negative and Gram-positive bacteria by disrupting both the outer membrane and the cytosolic membrane of bacteria. Also downregulates the expression of pro-inflammatory mediators (cyclooxygenase-2 (PTGS2/COX2), nitric oxide-induced synthase (NOS2), IL-1 beta (IL1B), TNF-alpha (TNF)) and upregulates the level of anti-inflammatory cytokine (IL10) by inactivating mitogen-activated protein kinase signaling in a lipopolysaccharide-stimulated murine macrophage cell line. This chain is Lycotoxin-Pa4a, found in Pardosa astrigera (Wolf spider).